Reading from the N-terminus, the 330-residue chain is MIKPIYLIIIGTVICLVILYYFYHEISDSKKLLTSTYQKNMLLESKIFELERKSNVFIEKYDNLKNVRGQKNSSKIDSPVLSITYHSDMVKNGNLSVKYDEMGNTEVNELLQKINKNRDPKQLSNIHQPIPTKTSHNLVSKLEQDVGYKIPGTSSLLQNNCAQNIQKNTLHIDYPESINIPQNIKPNNIVVDNEFMMDENDEFNNPSKNLETEGDIFEVDMNNIFKNNKIKLLNNTDKKLSYSDSELMFGNDYQDILNSLPNDISDISANSLSSFDETVIKSISENLKNNIVSDSLSASIDVRKKVEDKITRVKNKSKISSKSRNSVVKK.

The chain crosses the membrane as a helical span at residues 2 to 22 (IKPIYLIIIGTVICLVILYYF). N-linked (GlcNAc...) asparagine; by host glycosylation is found at asparagine 72, asparagine 94, asparagine 234, and asparagine 315.

The protein resides in the membrane. This is an uncharacterized protein from Acanthamoeba polyphaga mimivirus (APMV).